The following is a 298-amino-acid chain: Tyrosine recombinase XerC (298 aa).

The region spanning 1 to 84 (MNHIQEAFLN…TLRTFYEYWM (84 aa)) is the Core-binding (CB) domain. Residues 105–286 (YLPQFFYEEE…SNQQLRKVYL (182 aa)) form the Tyr recombinase domain. Residues arginine 145, lysine 169, histidine 238, arginine 241, and histidine 264 contribute to the active site. Tyrosine 273 (O-(3'-phospho-DNA)-tyrosine intermediate) is an active-site residue.

It belongs to the 'phage' integrase family. XerC subfamily. As to quaternary structure, forms a cyclic heterotetrameric complex composed of two molecules of XerC and two molecules of XerD.

Its subcellular location is the cytoplasm. Its function is as follows. Site-specific tyrosine recombinase, which acts by catalyzing the cutting and rejoining of the recombining DNA molecules. The XerC-XerD complex is essential to convert dimers of the bacterial chromosome into monomers to permit their segregation at cell division. It also contributes to the segregational stability of plasmids. This Staphylococcus aureus (strain Mu3 / ATCC 700698) protein is Tyrosine recombinase XerC.